The primary structure comprises 184 residues: Cytidylate kinase (184 aa).

8-16 (GQPGSGKTT) contributes to the ATP binding site.

Belongs to the cytidylate kinase family. Type 2 subfamily.

It is found in the cytoplasm. It carries out the reaction CMP + ATP = CDP + ADP. It catalyses the reaction dCMP + ATP = dCDP + ADP. The protein is Cytidylate kinase of Pyrobaculum calidifontis (strain DSM 21063 / JCM 11548 / VA1).